The following is a 633-amino-acid chain: Glutamyl-tRNA(Gln) amidotransferase subunit E (633 aa).

The protein belongs to the GatB/GatE family. GatE subfamily. Heterodimer of GatD and GatE.

It carries out the reaction L-glutamyl-tRNA(Gln) + L-glutamine + ATP + H2O = L-glutaminyl-tRNA(Gln) + L-glutamate + ADP + phosphate + H(+). Functionally, allows the formation of correctly charged Gln-tRNA(Gln) through the transamidation of misacylated Glu-tRNA(Gln) in organisms which lack glutaminyl-tRNA synthetase. The reaction takes place in the presence of glutamine and ATP through an activated gamma-phospho-Glu-tRNA(Gln). The GatDE system is specific for glutamate and does not act on aspartate. This is Glutamyl-tRNA(Gln) amidotransferase subunit E from Methanosarcina acetivorans (strain ATCC 35395 / DSM 2834 / JCM 12185 / C2A).